The primary structure comprises 346 residues: Annexin A1 (346 aa).

Position 5 is a phosphoserine; by TRPM7 (S5). Q19 participates in a covalent cross-link: Isoglutamyl lysine isopeptide (Gln-Lys) (interchain with K-?). Y21 is subject to Phosphotyrosine; by EGFR. Residues S34 and S37 each carry the phosphoserine modification. 4 Annexin repeats span residues 42–113, 114–185, 197–269, and 273–344; these read FNPS…ALLK, TPAR…SLAK, DLAD…AIVK, and SKPM…ALCG. K58 is subject to N6-acetyllysine. Positions 59, 60, 62, 97, 100, 105, 127, 129, 131, 132, and 134 each coordinate Ca(2+). T136 carries the phosphothreonine modification. The Ca(2+) site is built by D171, G210, and R213. A Glycyl lysine isopeptide (Lys-Gly) (interchain with G-Cter in SUMO1); alternate cross-link involves residue K214. A Glycyl lysine isopeptide (Lys-Gly) (interchain with G-Cter in SUMO2); alternate cross-link involves residue K214. Residues G215, D253, E255, and M256 each contribute to the Ca(2+) site. A Glycyl lysine isopeptide (Lys-Gly) (interchain with G-Cter in SUMO1) cross-link involves residue K257. Ca(2+) is bound by residues E261, M286, G288, and G290. An N6-acetyllysine modification is found at K312. Cysteines 324 and 343 form a disulfide. Residues L328, E330, and T331 each coordinate Ca(2+). K332 participates in a covalent cross-link: Glycyl lysine isopeptide (Lys-Gly) (interchain with G-Cter in SUMO1). Residue E336 participates in Ca(2+) binding.

This sequence belongs to the annexin family. Homodimer; non-covalently linked. Homodimer; linked by transglutamylation. Homodimers linked by transglutamylation are observed in placenta, but not in other tissues. Interacts with S100A11. Heterotetramer, formed by two molecules each of S100A11 and ANXA1. Interacts with DYSF. Interacts with EGFR. Post-translationally, phosphorylated by protein kinase C, EGFR and TRPM7. Phosphorylated in response to EGF treatment. In terms of processing, sumoylated. Proteolytically cleaved by cathepsin CTSG to release the active N-terminal peptide Ac2-26.

It is found in the nucleus. The protein resides in the cytoplasm. Its subcellular location is the cell projection. The protein localises to the cilium. It localises to the basolateral cell membrane. It is found in the lateral cell membrane. The protein resides in the cell membrane. Its subcellular location is the apical cell membrane. The protein localises to the membrane. It localises to the early endosome. It is found in the cytoplasmic vesicle membrane. The protein resides in the endosome membrane. Its subcellular location is the secreted. The protein localises to the extracellular space. It localises to the extracellular exosome. It is found in the cytoplasmic vesicle. The protein resides in the secretory vesicle lumen. Its subcellular location is the phagocytic cup. Its function is as follows. Plays important roles in the innate immune response as effector of glucocorticoid-mediated responses and regulator of the inflammatory process. Has anti-inflammatory activity. Plays a role in glucocorticoid-mediated down-regulation of the early phase of the inflammatory response. Contributes to the adaptive immune response by enhancing signaling cascades that are triggered by T-cell activation, regulates differentiation and proliferation of activated T-cells. Promotes the differentiation of T-cells into Th1 cells and negatively regulates differentiation into Th2 cells. Has no effect on unstimulated T-cells. Negatively regulates hormone exocytosis via activation of the formyl peptide receptors and reorganization of the actin cytoskeleton. Has high affinity for Ca(2+) and can bind up to eight Ca(2+) ions. Displays Ca(2+)-dependent binding to phospholipid membranes. Plays a role in the formation of phagocytic cups and phagosomes. Plays a role in phagocytosis by mediating the Ca(2+)-dependent interaction between phagosomes and the actin cytoskeleton. In terms of biological role, functions at least in part by activating the formyl peptide receptors and downstream signaling cascades. Promotes chemotaxis of granulocytes and monocytes via activation of the formyl peptide receptors. Promotes rearrangement of the actin cytoskeleton, cell polarization and cell migration. Promotes resolution of inflammation and wound healing. Acts via neutrophil N-formyl peptide receptors to enhance the release of CXCL2. This Equus caballus (Horse) protein is Annexin A1 (ANXA1).